A 201-amino-acid polypeptide reads, in one-letter code: Histidine biosynthesis bifunctional protein HisIE (201 aa).

A phosphoribosyl-AMP cyclohydrolase region spans residues 1 to 111; that stretch reads MKINWQKVDN…EKTTQPDWIF (111 aa). The segment at 112 to 201 is phosphoribosyl-ATP pyrophosphohydrolase; the sequence is LSKLERLIAS…IHKLKERHTK (90 aa).

The protein in the N-terminal section; belongs to the PRA-CH family. In the C-terminal section; belongs to the PRA-PH family.

It is found in the cytoplasm. The catalysed reaction is 1-(5-phospho-beta-D-ribosyl)-ATP + H2O = 1-(5-phospho-beta-D-ribosyl)-5'-AMP + diphosphate + H(+). It carries out the reaction 1-(5-phospho-beta-D-ribosyl)-5'-AMP + H2O = 1-(5-phospho-beta-D-ribosyl)-5-[(5-phospho-beta-D-ribosylamino)methylideneamino]imidazole-4-carboxamide. It participates in amino-acid biosynthesis; L-histidine biosynthesis; L-histidine from 5-phospho-alpha-D-ribose 1-diphosphate: step 2/9. The protein operates within amino-acid biosynthesis; L-histidine biosynthesis; L-histidine from 5-phospho-alpha-D-ribose 1-diphosphate: step 3/9. The sequence is that of Histidine biosynthesis bifunctional protein HisIE (hisI) from Pasteurella multocida (strain Pm70).